The primary structure comprises 88 residues: HssA/B-like protein 12 (88 aa).

It belongs to the hssA/B family.

This chain is HssA/B-like protein 12 (hssl12), found in Dictyostelium discoideum (Social amoeba).